Consider the following 699-residue polypeptide: Osmotic avoidance abnormal protein 3 (699 aa).

In terms of domain architecture, Kinesin motor spans 4-327 (SVRVAVRCRP…LRYANRAKNI (324 aa)). 87-94 (GQTGSGKT) lines the ATP pocket. Positions 339 to 523 (DALLREYQEE…EIEDLHGEFE (185 aa)) form a coiled coil.

This sequence belongs to the TRAFAC class myosin-kinesin ATPase superfamily. Kinesin family. Kinesin II subfamily. Expressed in an exclusive set of 26 chemosensory neurons whose dendritic endings are exposed to the external environment; six IL2 neurons of the inner labial sensilla, 8 pairs of amphid neurons in the head, and 2 pairs of phasmid neurons in the tail.

The protein resides in the cytoplasm. It is found in the cytoskeleton. It localises to the cell projection. Its subcellular location is the cilium. The protein localises to the cilium axoneme. The protein resides in the cilium basal body. Functionally, kinesin motor protein which is required for the anterograde intraflagellar transport (IFT) along the middle segment of the sensory neuron cilia together with the kinesin II motor complex (composed of klp-11, klp-20 and kap-1) and on its own, is required for IFT along the distal segment. In addition, regulates the length of cilia. May have a role during neurogenesis and axonal transport. The sequence is that of Osmotic avoidance abnormal protein 3 from Caenorhabditis elegans.